Here is a 340-residue protein sequence, read N- to C-terminus: MEASLLMRSSCCSSAIGGFFDHRRELSTSTPISTLLPLPSTKSSFSVRCSLPQPSKPRSGTSSVHAVMTLAGSLTGKKRVDESESLTLEGIRNSLIRQEDSIIFGLLERAKYCYNADTYDPTAFDMDGFNGSLVEYMVKGTEKLHAKVGRFKSPDEHPFFPDDLPEPMLPPLQYPKVLHFAADSININKKIWNMYFRDLVPRLVKKGDDGNYGSTAVCDAICLQCLSKRIHYGKFVAEAKFQASPEAYESAIKAQDKDALMDMLTFPTVEDAIKKRVEMKTRTYGQEVKVGMEEKEEEEEEGNESHVYKISPILVGDLYGDWIMPLTKEVQVEYLLRRLD.

Residues 1–65 constitute a chloroplast transit peptide; the sequence is MEASLLMRSS…KPRSGTSSVH (65 aa). At Ala66 the chain carries N-acetylalanine. Arg79 provides a ligand contact to L-phenylalanine. Residues 79–340 form the Chorismate mutase domain; that stretch reads RVDESESLTL…QVEYLLRRLD (262 aa). L-tyrosine-binding positions include Arg150 and 211 to 214; that span reads NYGS. Residue 211–214 participates in L-phenylalanine binding; that stretch reads NYGS.

Homodimer. As to expression, expressed in roots, shoots, rosette leaves, stems, cauline leaves, flowers and siliques.

The protein localises to the plastid. It is found in the chloroplast. The enzyme catalyses chorismate = prephenate. Its pathway is metabolic intermediate biosynthesis; prephenate biosynthesis; prephenate from chorismate: step 1/1. Its activity is regulated as follows. Allosterically inhibited by tyrosine and phenylalanine. Activated by tryptophan. In terms of biological role, may play a role in chloroplast biogenesis. This Arabidopsis thaliana (Mouse-ear cress) protein is Chorismate mutase 1, chloroplastic.